The following is a 296-amino-acid chain: Sulfotransferase 1C2 (296 aa).

3'-phosphoadenylyl sulfate is bound at residue 49 to 54 (KSGTTW). A substrate-binding site is contributed by 107 to 109 (RTH). The active-site Proton acceptor is the histidine 109. 3'-phosphoadenylyl sulfate-binding positions include arginine 131, serine 139, tyrosine 194, and 228 to 233 (TSFEKM). Serine 139 bears the Phosphoserine mark. Serine 254 bears the Phosphoserine mark. 256–260 (FMRKG) is a binding site for 3'-phosphoadenylyl sulfate.

Belongs to the sulfotransferase 1 family. As to expression, highly expressed in kidney and at lower levels in stomach and liver. More specifically found in the epithelia of proximal tubules of the kidney, of the bile duct, of the gastric mucosa, and in hepatocytes.

The protein localises to the cytoplasm. The protein resides in the lysosome. It localises to the mitochondrion. It catalyses the reaction a phenol + 3'-phosphoadenylyl sulfate = an aryl sulfate + adenosine 3',5'-bisphosphate + H(+). It carries out the reaction cholesterol + 3'-phosphoadenylyl sulfate = cholesterol sulfate + adenosine 3',5'-bisphosphate + H(+). In terms of biological role, sulfotransferase that utilizes 3'-phospho-5'-adenylyl sulfate (PAPS) to catalyze the sulfate conjugation of phenolic compounds. Does not transfer sulfate to steroids, dopamine, acetaminophen, or alpha-naphthol. Except in mitochondria, where it can add sulfate to cholesterol producing cholesterol sulfate, which alters mitochondrial membrane organization, and impacts protein complex mobility increasing state-III respiration, thereby modulating mitochondrial respiration. Catalyzes the sulfation of the carcinogenic N-hydroxy-2-acetylaminofluorene leading to highly reactive intermediates capable of forming DNA adducts, potentially resulting in mutagenesis. The polypeptide is Sulfotransferase 1C2 (Sult1c2) (Rattus norvegicus (Rat)).